The sequence spans 3078 residues: Probable polyketide synthase 44 (3078 aa).

Positions 10–435 (DNDVAIIGIG…GSNACLILTE (426 aa)) constitute a Ketosynthase family 3 (KS3) domain. Residues Cys-175, His-320, and His-358 each act as for beta-ketoacyl synthase activity in the active site. The segment at 627 to 660 (GILASISIGHSLGEVSSAVCSGMIDLETGCFIIY) is acyl/malonyl transferase. Residue Ser-637 is the For acyl/malonyl transferase activity of the active site. The N-terminal hotdog fold stretch occupies residues 952–1072 (TNHLGYRNER…GRLSTTKHND (121 aa)). The PKS/mFAS DH domain occupies 952 to 1239 (TNHLGYRNER…YTQLTPYKNQ (288 aa)). The Proton acceptor; for dehydratase activity role is filled by His-984. The interval 1088 to 1239 (NFVTIQKKEL…YTQLTPYKNQ (152 aa)) is C-terminal hotdog fold. Asp-1150 (proton donor; for dehydratase activity) is an active-site residue. Residues 2080–2119 (LENIKTDLSNKNDNNNNNNNNNNDNKESNIKELLDNDDDE) adopt a coiled-coil conformation. Positions 2087 to 2108 (LSNKNDNNNNNNNNNNDNKESN) are disordered. Residues 2090–2102 (KNDNNNNNNNNNN) show a composition bias toward low complexity. One can recognise a Carrier domain in the interval 2558–2636 (SDDLSIREQI…QLIQSVTDAM (79 aa)). The residue at position 2596 (Ser-2596) is an O-(pantetheine 4'-phosphoryl)serine. Residues 2694–2714 (NTVFLTGSSGFIGIYILFYLI) form a helical membrane-spanning segment.

It depends on pantetheine 4'-phosphate as a cofactor.

The protein localises to the membrane. Its function is as follows. Probable polyketide synthase. The protein is Probable polyketide synthase 44 (pks44) of Dictyostelium discoideum (Social amoeba).